Here is a 227-residue protein sequence, read N- to C-terminus: Cytochrome c oxidase subunit 2 (227 aa).

The Mitochondrial intermembrane segment spans residues 1–14; sequence MAYPMQLGLQDATS. The helical transmembrane segment at 15 to 45 threads the bilayer; it reads PIMEELTDFHDHTLMIVFLISTLVLYIISMM. Topologically, residues 46–59 are mitochondrial matrix; the sequence is LTTKLTHTSTMDAQ. A helical membrane pass occupies residues 60 to 87; that stretch reads EVETIWTVLPAVILVMIALPSLRILYMM. At 88–227 the chain is on the mitochondrial intermembrane side; sequence DEINDPYLTV…QFESWASSMT (140 aa). Positions 161, 196, 198, 200, 204, and 207 each coordinate Cu cation. Glutamate 198 contributes to the Mg(2+) binding site.

The protein belongs to the cytochrome c oxidase subunit 2 family. In terms of assembly, component of the cytochrome c oxidase (complex IV, CIV), a multisubunit enzyme composed of 14 subunits. The complex is composed of a catalytic core of 3 subunits MT-CO1, MT-CO2 and MT-CO3, encoded in the mitochondrial DNA, and 11 supernumerary subunits COX4I, COX5A, COX5B, COX6A, COX6B, COX6C, COX7A, COX7B, COX7C, COX8 and NDUFA4, which are encoded in the nuclear genome. The complex exists as a monomer or a dimer and forms supercomplexes (SCs) in the inner mitochondrial membrane with NADH-ubiquinone oxidoreductase (complex I, CI) and ubiquinol-cytochrome c oxidoreductase (cytochrome b-c1 complex, complex III, CIII), resulting in different assemblies (supercomplex SCI(1)III(2)IV(1) and megacomplex MCI(2)III(2)IV(2)). Found in a complex with TMEM177, COA6, COX18, COX20, SCO1 and SCO2. Interacts with TMEM177 in a COX20-dependent manner. Interacts with COX20. Interacts with COX16. The cofactor is Cu cation.

The protein resides in the mitochondrion inner membrane. It catalyses the reaction 4 Fe(II)-[cytochrome c] + O2 + 8 H(+)(in) = 4 Fe(III)-[cytochrome c] + 2 H2O + 4 H(+)(out). Functionally, component of the cytochrome c oxidase, the last enzyme in the mitochondrial electron transport chain which drives oxidative phosphorylation. The respiratory chain contains 3 multisubunit complexes succinate dehydrogenase (complex II, CII), ubiquinol-cytochrome c oxidoreductase (cytochrome b-c1 complex, complex III, CIII) and cytochrome c oxidase (complex IV, CIV), that cooperate to transfer electrons derived from NADH and succinate to molecular oxygen, creating an electrochemical gradient over the inner membrane that drives transmembrane transport and the ATP synthase. Cytochrome c oxidase is the component of the respiratory chain that catalyzes the reduction of oxygen to water. Electrons originating from reduced cytochrome c in the intermembrane space (IMS) are transferred via the dinuclear copper A center (CU(A)) of subunit 2 and heme A of subunit 1 to the active site in subunit 1, a binuclear center (BNC) formed by heme A3 and copper B (CU(B)). The BNC reduces molecular oxygen to 2 water molecules using 4 electrons from cytochrome c in the IMS and 4 protons from the mitochondrial matrix. The protein is Cytochrome c oxidase subunit 2 (MT-CO2) of Cratogeomys bursarius (Plains pocket gopher).